The primary structure comprises 230 residues: Lipopolysaccharide core heptose(II) kinase WaaY (230 aa).

Belongs to the protein kinase superfamily. RfaY/WaaY family.

The enzyme catalyses alpha-D-Glc-(1-&gt;3)-[L-alpha-D-Hep-(1-&gt;7)]-L-alpha-D-Hep-(1-&gt;3)-4-O-PO3(2-)-L-alpha-D-Hep-(1-&gt;5)-[alpha-Kdo-(2-&gt;4)]-alpha-Kdo-(2-&gt;6)-lipid A + ATP = alpha-D-Glc-(1-&gt;3)-[L-alpha-D-Hep-(1-&gt;7)]-4-O-PO3(2-)-L-alpha-D-Hep-(1-&gt;3)-4-O-PO3(2-)-L-alpha-D-Hep-(1-&gt;5)-[alpha-Kdo-(2-&gt;4)]-alpha-Kdo-(2-&gt;6)-lipid A + ADP + H(+). It functions in the pathway bacterial outer membrane biogenesis; LPS core biosynthesis. Its function is as follows. Kinase involved in the biosynthesis of the core oligosaccharide region of lipopolysaccharide (LPS). Catalyzes the phosphorylation of the second heptose unit (HepII) of the inner core. In Escherichia coli, this protein is Lipopolysaccharide core heptose(II) kinase WaaY.